A 156-amino-acid chain; its full sequence is Endoribonuclease YbeY (156 aa).

Zn(2+) contacts are provided by histidine 115, histidine 119, and histidine 125.

Belongs to the endoribonuclease YbeY family. The cofactor is Zn(2+).

The protein localises to the cytoplasm. Its function is as follows. Single strand-specific metallo-endoribonuclease involved in late-stage 70S ribosome quality control and in maturation of the 3' terminus of the 16S rRNA. The sequence is that of Endoribonuclease YbeY from Mannheimia succiniciproducens (strain KCTC 0769BP / MBEL55E).